A 138-amino-acid polypeptide reads, in one-letter code: Small ribosomal subunit protein uS11c (138 aa).

The segment at 1 to 22 (MAKPIPRIGSQRNRRINSRKNA) is disordered. Positions 12-22 (RNRRINSRKNA) are enriched in basic residues.

This sequence belongs to the universal ribosomal protein uS11 family. In terms of assembly, part of the 30S ribosomal subunit.

The protein localises to the plastid. Its subcellular location is the chloroplast. The polypeptide is Small ribosomal subunit protein uS11c (Fagopyrum esculentum subsp. ancestrale (Wild buckwheat)).